The primary structure comprises 1097 residues: Putative regulator of nonsense transcripts 1 (1097 aa).

Low complexity predominate over residues 42–53; that stretch reads SQTQTQGHTQSQ. The interval 42-67 is disordered; the sequence is SQTQTQGHTQSQLDNQLNGPDDGLHN. The Upf1 CH-rich domain occupies 96 to 254; sequence TKDLPVHACR…NKLEELWKDN (159 aa). The Zn(2+) site is built by Cys104, Cys108, Cys119, Ser122, Cys127, His137, His141, Cys147, Cys165, Cys168, Cys191, and Cys195. The segment at 104–137 is C3H; it reads CRSYCGIHDPACVVYCNTSKKWFCNGRGNTSGSH. Positions 119 to 147 are CC/SHH/C; that stretch reads CNTSKKWFCNGRGNTSGSHIVNHLVRAKC. Residues 165 to 195 are C4; the sequence is CYNCGCRNVFLLGFIPAKADSVVVLLCRQPC. Residues Gln457, 474–481, Tyr683, and Glu813 each bind ATP; that span reads GPPGTGKT. The interval 977–998 is disordered; the sequence is QGQTNGPAAGRGAMKGKSGRGG.

Belongs to the DNA2/NAM7 helicase family.

It localises to the cytoplasm. Its subcellular location is the P-body. It carries out the reaction ATP + H2O = ADP + phosphate + H(+). RNA-dependent helicase required for nonsense-mediated decay (NMD) of aberrant mRNAs containing premature stop codons and modulates the expression level of normal mRNAs. The formation of an rent1-rent2-rent3 surveillance complex is believed to activate NMD. In Takifugu rubripes (Japanese pufferfish), this protein is Putative regulator of nonsense transcripts 1 (rent1).